The sequence spans 143 residues: Endoribonuclease YbeY (143 aa).

The Zn(2+) site is built by His106, His110, and His116.

The protein belongs to the endoribonuclease YbeY family. The cofactor is Zn(2+).

The protein localises to the cytoplasm. In terms of biological role, single strand-specific metallo-endoribonuclease involved in late-stage 70S ribosome quality control and in maturation of the 3' terminus of the 16S rRNA. This is Endoribonuclease YbeY from Petrotoga mobilis (strain DSM 10674 / SJ95).